The following is a 1259-amino-acid chain: MELAAWCRWGLLLALLPSGAAGTQVCTGTDMKLRLPASPETHLDMLRHLYQGCQVVQGNLELTYLPANASLSFLQDIQEVQGYVLIAHSQVRQIPLQRLRIVRGTQLFEDNYALAVLDNGDPLEGGIPAPGAAQGGLRELQLRSLTEILKGGVLIQRSPQLCHQDTILWKDVFHKNNQLALTLIDTNRFSACPPCSPACKDAHCWGASSGDCQSLTRTVCAGGCARCKGPQPTDCCHEQCAAGCTGPKHSDCLACLHFNHSGICELHCPALVTYNTDTFESMPNPEGRYTFGASCVTSCPYNYLSTDVGSCTLVCPLNNQEVTAEDGTQRCEKCSKPCARVCYGLGMEHLREVRAVTSANIQEFAGCKKIFGSLAFLPESFDGDPASNTAPLQPEQLRVFEALEEITGYLYISAWPDSLPNLSVFQNLRVIRGRVLHDGAYSLTLQGLGISWLGLRSLRELGSGLALIHRNARLCFVHTVPWDQLFRNPHQALLHSANRPEEECVGEGLACYPCAHGHCWGPGPTQCVNCSQFLRGQECVEECRVLQGLPREYVKDRYCLPCHSECQPQNGSVTCFGSEADQCVACAHYKDPPFCVARCPSGVKPDLSFMPIWKFADEEGTCQPCPINCTHSCADLDEKGCPAEQRASPVTSIIAAVVGILLAVVVGLVLGILIKRRRQKIRKYTMRRLLQETELVEPLTPSGAMPNQAQMRILKETELRKVKVLGSGAFGTVYKGIWIPDGENVKIPVAIKVLRENTSPKANKEILDEAYVMAGVGSPYVSRLLGICLTSTVQLVTQLMPYGCLLDHVREHRGRLGSQDLLNWCVQIAKGMSYLEDVRLVHRDLAARNVLVKSPNHVKITDFGLARLLDIDETEYHADGGKVPIKWMALESIPPRRFTHQSDVWSYGVTVWELMTFGAKPYDGIPAREIPDLLEKGERLPQPPICTIDVYMIMVKCWMIDSECRPRFRELVAEFSRMARDPQRFVVIQNEDLGPASPLDSTFYRSLLEDDDMGDLVDAEEYLVPQQGFFCPEPTPGAGGTAHRRHRSSSTRNGGGELTLGLEPSEEEPPKSPLAPSEGAGSDVFDGDLGMGAAKGLQSLPSQDPSPLQRYSEDPTVPLPPETDGKVAPLTCSPQPEYVNQPEVWPQPPLALEGPLPPSRPAGATLERPKTLSPKTLSPGKNGVVKDVFAFGSAVENPEYLAPRGRAAPQPHPPPAFSPAFDNLYYWDQDPSERGSPPSTFEGTPTAENPEYLGLDVPV.

Residues 1 to 22 (MELAAWCRWGLLLALLPSGAAG) form the signal peptide. Over 23-653 (TQVCTGTDMK…EQRASPVTSI (631 aa)) the chain is Extracellular. Cys-26 and Cys-53 form a disulfide bridge. Asn-68 carries an N-linked (GlcNAc...) asparagine glycan. Disulfide bonds link Cys-162–Cys-192, Cys-195–Cys-204, Cys-199–Cys-212, Cys-220–Cys-227, Cys-224–Cys-235, Cys-236–Cys-244, Cys-240–Cys-252, Cys-255–Cys-264, Cys-268–Cys-295, Cys-299–Cys-311, Cys-315–Cys-331, Cys-334–Cys-338, and Cys-342–Cys-367. Position 182 is a phosphothreonine (Thr-182). N-linked (GlcNAc...) asparagine glycosylation is present at Asn-259. The N-linked (GlcNAc...) asparagine glycan is linked to Asn-421. 3 disulfide bridges follow: Cys-475–Cys-504, Cys-511–Cys-519, and Cys-514–Cys-527. Residue Asn-529 is glycosylated (N-linked (GlcNAc...) asparagine). Cystine bridges form between Cys-530/Cys-539, Cys-543/Cys-559, Cys-562/Cys-575, Cys-566/Cys-583, Cys-586/Cys-595, Cys-599/Cys-622, Cys-625/Cys-633, and Cys-629/Cys-641. N-linked (GlcNAc...) asparagine glycosylation is present at Asn-570. The N-linked (GlcNAc...) asparagine glycan is linked to Asn-628. A helical membrane pass occupies residues 654–674 (IAAVVGILLAVVVGLVLGILI). Residues 675–688 (KRRRQKIRKYTMRR) form a required for interaction with KPNB1 and EEA1 region. The Nuclear localization signal signature appears at 675–688 (KRRRQKIRKYTMRR). Topologically, residues 675-1259 (KRRRQKIRKY…PEYLGLDVPV (585 aa)) are cytoplasmic. Residues 719–986 (LRKVKVLGSG…RMARDPQRFV (268 aa)) form the Protein kinase domain. ATP is bound by residues 725-733 (LGSGAFGTV) and Lys-752. The Proton acceptor role is filled by Asp-844. Tyr-876 carries the post-translational modification Phosphotyrosine. Residues 1027-1183 (QGFFCPEPTP…PKTLSPGKNG (157 aa)) form a disordered region. Ser-1077, Ser-1082, and Ser-1106 each carry phosphoserine. Tyr-1111 bears the Phosphotyrosine mark. Tyr-1138 is modified (phosphotyrosine; by autocatalysis). Pro residues predominate over residues 1145–1160 (WPQPPLALEGPLPPSR). Thr-1165 carries the phosphothreonine modification. Residues 1199 to 1201 (EYL) are interaction with PIK3C2B. Tyr-1200 bears the Phosphotyrosine mark. The tract at residues 1203 to 1259 (PRGRAAPQPHPPPAFSPAFDNLYYWDQDPSERGSPPSTFEGTPTAENPEYLGLDVPV) is disordered. Polar residues predominate over residues 1237-1247 (PPSTFEGTPTA). At Tyr-1252 the chain carries Phosphotyrosine; by autocatalysis.

Belongs to the protein kinase superfamily. Tyr protein kinase family. EGF receptor subfamily. In terms of assembly, homodimer. Heterodimer with EGFR, ERBB3 and ERBB4. Part of a complex with EGFR and either PIK3C2A or PIK3C2B. May interact with PIK3C2B when phosphorylated on Tyr-1200. Interacts with PRKCABP and PLXNB1. Interacts (when phosphorylated on Tyr-1252) with MEMO1. Interacts with MUC1. Interacts (when phosphorylated on Tyr-1138) with GRB7 (via SH2 domain). Interacts (when phosphorylated on Tyr-1252) with ERBIN. Interacts with SRC, KPNB1, PTK6, RANBP2, EEA1, CRM1, CLTC, RPA194, MYOC and ACTB. Interacts (preferentially with the tyrosine phosphorylated form) with CPNE3; this interaction occurs at the cell membrane and is increased in a growth factor heregulin-dependent manner. Interacts with HSP90AA1 and HSP90AB1 in an ATP-dependent manner; the interaction suppresses ERBB2 kinase activity. Interacts with SORL1; this interaction regulates ERBB2 subcellular distribution by promoting its recycling after internalization from endosomes back to the plasma membrane, hence stimulates ERBB2-mediated signaling. Interacts with SH3BGRL. Interacts with ROR1. In terms of processing, autophosphorylated. Autophosphorylation occurs in trans, i.e. one subunit of the dimeric receptor phosphorylates tyrosine residues on the other subunit. Ligand-binding increases phosphorylation on tyrosine residues. Signaling via SEMA4C promotes phosphorylation at Tyr-1252. Dephosphorylated by PTPN12.

The protein resides in the cell membrane. Its subcellular location is the cell projection. The protein localises to the ruffle membrane. It localises to the early endosome. It is found in the cytoplasm. The protein resides in the perinuclear region. Its subcellular location is the nucleus. The catalysed reaction is L-tyrosyl-[protein] + ATP = O-phospho-L-tyrosyl-[protein] + ADP + H(+). In terms of biological role, protein tyrosine kinase that is part of several cell surface receptor complexes, but that apparently needs a coreceptor for ligand binding. Essential component of a neuregulin-receptor complex, although neuregulins do not interact with it alone. GP30 is a potential ligand for this receptor. Regulates outgrowth and stabilization of peripheral microtubules (MTs). Upon ERBB2 activation, the MEMO1-RHOA-DIAPH1 signaling pathway elicits the phosphorylation and thus the inhibition of GSK3B at cell membrane. This prevents the phosphorylation of APC and CLASP2, allowing its association with the cell membrane. In turn, membrane-bound APC allows the localization of MACF1 to the cell membrane, which is required for microtubule capture and stabilization. Functionally, in the nucleus is involved in transcriptional regulation. Associates with the 5'-TCAAATTC-3' sequence in the PTGS2/COX-2 promoter and activates its transcription. Implicated in transcriptional activation of CDKN1A; the function involves STAT3 and SRC. Involved in the transcription of rRNA genes by RNA Pol I and enhances protein synthesis and cell growth. In Canis lupus familiaris (Dog), this protein is Receptor tyrosine-protein kinase erbB-2 (ERBB2).